Reading from the N-terminus, the 234-residue chain is Large ribosomal subunit protein uL1 (234 aa).

Belongs to the universal ribosomal protein uL1 family. As to quaternary structure, part of the 50S ribosomal subunit.

Binds directly to 23S rRNA. The L1 stalk is quite mobile in the ribosome, and is involved in E site tRNA release. Its function is as follows. Protein L1 is also a translational repressor protein, it controls the translation of the L11 operon by binding to its mRNA. This chain is Large ribosomal subunit protein uL1, found in Corynebacterium aurimucosum (strain ATCC 700975 / DSM 44827 / CIP 107346 / CN-1) (Corynebacterium nigricans).